Consider the following 135-residue polypeptide: Protein PsiE homolog (135 aa).

4 consecutive transmembrane segments (helical) span residues 14–34, 54–74, 82–102, and 107–127; these read LQTI…IFLV, YQLI…ALIV, HFPL…LIIV, and PSDT…LYLA.

It belongs to the PsiE family.

The protein resides in the cell inner membrane. This Pectobacterium carotovorum subsp. carotovorum (strain PC1) protein is Protein PsiE homolog.